The following is a 66-amino-acid chain: Large ribosomal subunit protein uL29 (66 aa).

It belongs to the universal ribosomal protein uL29 family.

The chain is Large ribosomal subunit protein uL29 from Bacillus anthracis (strain CDC 684 / NRRL 3495).